We begin with the raw amino-acid sequence, 156 residues long: Small ribosomal subunit protein uS7 (156 aa).

Belongs to the universal ribosomal protein uS7 family. Part of the 30S ribosomal subunit. Contacts proteins S9 and S11.

One of the primary rRNA binding proteins, it binds directly to 16S rRNA where it nucleates assembly of the head domain of the 30S subunit. Is located at the subunit interface close to the decoding center, probably blocks exit of the E-site tRNA. The sequence is that of Small ribosomal subunit protein uS7 from Bacillus licheniformis (strain ATCC 14580 / DSM 13 / JCM 2505 / CCUG 7422 / NBRC 12200 / NCIMB 9375 / NCTC 10341 / NRRL NRS-1264 / Gibson 46).